The following is a 26-amino-acid chain: Morintide mO4 (26 aa).

Residues 1–26 enclose the Chitin-binding type-1 domain; sequence NRLCCSQYGFCGTTSEYCSRVSGCQS. Cys-4 and Cys-18 are disulfide-bonded.

As to expression, seeds (at protein level).

In terms of biological role, chitin-binding protein which functions in defense against chitin-containing fungal pathogens. This Moringa oleifera (Horseradish tree) protein is Morintide mO4.